A 258-amino-acid polypeptide reads, in one-letter code: Ribosomal RNA small subunit methyltransferase A (258 aa).

His-13, Leu-15, Gly-41, Asp-63, Asp-87, and Asn-106 together coordinate S-adenosyl-L-methionine.

It belongs to the class I-like SAM-binding methyltransferase superfamily. rRNA adenine N(6)-methyltransferase family. RsmA subfamily.

Its subcellular location is the cytoplasm. The enzyme catalyses adenosine(1518)/adenosine(1519) in 16S rRNA + 4 S-adenosyl-L-methionine = N(6)-dimethyladenosine(1518)/N(6)-dimethyladenosine(1519) in 16S rRNA + 4 S-adenosyl-L-homocysteine + 4 H(+). Its function is as follows. Specifically dimethylates two adjacent adenosines (A1518 and A1519) in the loop of a conserved hairpin near the 3'-end of 16S rRNA in the 30S particle. May play a critical role in biogenesis of 30S subunits. In Cytophaga hutchinsonii (strain ATCC 33406 / DSM 1761 / CIP 103989 / NBRC 15051 / NCIMB 9469 / D465), this protein is Ribosomal RNA small subunit methyltransferase A.